A 345-amino-acid chain; its full sequence is Phosphoribosylformylglycinamidine cyclo-ligase (345 aa).

Belongs to the AIR synthase family.

The protein localises to the cytoplasm. It carries out the reaction 2-formamido-N(1)-(5-O-phospho-beta-D-ribosyl)acetamidine + ATP = 5-amino-1-(5-phospho-beta-D-ribosyl)imidazole + ADP + phosphate + H(+). Its pathway is purine metabolism; IMP biosynthesis via de novo pathway; 5-amino-1-(5-phospho-D-ribosyl)imidazole from N(2)-formyl-N(1)-(5-phospho-D-ribosyl)glycinamide: step 2/2. This chain is Phosphoribosylformylglycinamidine cyclo-ligase, found in Bifidobacterium longum (strain DJO10A).